Reading from the N-terminus, the 300-residue chain is tRNA dimethylallyltransferase (300 aa).

11 to 18 (GPTAVGKS) is an ATP binding site. Residue 13 to 18 (TAVGKS) participates in substrate binding. Residues 35-38 (DSIQ) form an interaction with substrate tRNA region.

Belongs to the IPP transferase family. Monomer. The cofactor is Mg(2+).

The catalysed reaction is adenosine(37) in tRNA + dimethylallyl diphosphate = N(6)-dimethylallyladenosine(37) in tRNA + diphosphate. Its function is as follows. Catalyzes the transfer of a dimethylallyl group onto the adenine at position 37 in tRNAs that read codons beginning with uridine, leading to the formation of N6-(dimethylallyl)adenosine (i(6)A). In Borrelia duttonii (strain Ly), this protein is tRNA dimethylallyltransferase.